We begin with the raw amino-acid sequence, 962 residues long: Leucine--tRNA ligase (962 aa).

Positions P40–H51 match the 'HIGH' region motif. The 'KMSKS' region signature appears at K737–S741. Residue K740 participates in ATP binding.

Belongs to the class-I aminoacyl-tRNA synthetase family.

It is found in the cytoplasm. The catalysed reaction is tRNA(Leu) + L-leucine + ATP = L-leucyl-tRNA(Leu) + AMP + diphosphate. This chain is Leucine--tRNA ligase, found in Flavobacterium psychrophilum (strain ATCC 49511 / DSM 21280 / CIP 103535 / JIP02/86).